Here is a 254-residue protein sequence, read N- to C-terminus: Floral homeotic protein APETALA 1 (254 aa).

One can recognise an MADS-box domain in the interval 3–57 (RGRVQLKRIENKINRQVTFSKRRAGLLKKAHEISVLCDAEVALVVFSHKGKLFEY). Positions 88 to 178 (NTNWSMEYNR…SKQIKEREKI (91 aa)) constitute a K-box domain.

The protein localises to the nucleus. In terms of biological role, controls floral meristem identity. Is also required for normal development of sepals and petals. Is required for the transition of an influorescence meristem into a floral meristem. Interacts with LEAFY. In Sinapis alba (White mustard), this protein is Floral homeotic protein APETALA 1 (AP1).